A 244-amino-acid chain; its full sequence is tRNA (guanine-N(7)-)-methyltransferase (244 aa).

Polar residues predominate over residues 1–10 (MSDTPQSPAQ). A disordered region spans residues 1–20 (MSDTPQSPAQDSLAEHDEAR). Glutamate 74, glutamate 99, aspartate 126, and aspartate 149 together coordinate S-adenosyl-L-methionine. The active site involves aspartate 149. Residues lysine 153, aspartate 185, and 222-225 (TKFE) contribute to the substrate site.

The protein belongs to the class I-like SAM-binding methyltransferase superfamily. TrmB family.

It carries out the reaction guanosine(46) in tRNA + S-adenosyl-L-methionine = N(7)-methylguanosine(46) in tRNA + S-adenosyl-L-homocysteine. It participates in tRNA modification; N(7)-methylguanine-tRNA biosynthesis. In terms of biological role, catalyzes the formation of N(7)-methylguanine at position 46 (m7G46) in tRNA. The sequence is that of tRNA (guanine-N(7)-)-methyltransferase from Pseudomonas paraeruginosa (strain DSM 24068 / PA7) (Pseudomonas aeruginosa (strain PA7)).